A 279-amino-acid chain; its full sequence is DegV domain-containing protein CA_C0701 (279 aa).

One can recognise a DegV domain in the interval 4-277 (IKIVTDSTCD…TKACGVFFIE (274 aa)). Positions 62 and 94 each coordinate hexadecanoate.

May bind long-chain fatty acids, such as palmitate, and may play a role in lipid transport or fatty acid metabolism. This Clostridium acetobutylicum (strain ATCC 824 / DSM 792 / JCM 1419 / IAM 19013 / LMG 5710 / NBRC 13948 / NRRL B-527 / VKM B-1787 / 2291 / W) protein is DegV domain-containing protein CA_C0701.